Here is a 79-residue protein sequence, read N- to C-terminus: Keratin-associated protein 21-1 (79 aa).

Interacts with hair keratins.

Its function is as follows. In the hair cortex, hair keratin intermediate filaments are embedded in an interfilamentous matrix, consisting of hair keratin-associated proteins (KRTAP), which are essential for the formation of a rigid and resistant hair shaft through their extensive disulfide bond cross-linking with abundant cysteine residues of hair keratins. The matrix proteins include the high-sulfur and high-glycine-tyrosine keratins. This chain is Keratin-associated protein 21-1 (KRTAP21-1), found in Homo sapiens (Human).